A 317-amino-acid polypeptide reads, in one-letter code: Olfactory receptor 2T27 (317 aa).

Residues 1 to 22 lie on the Extracellular side of the membrane; sequence MEQSNYSVYADFILLGLFSNAR. A glycan (N-linked (GlcNAc...) asparagine) is linked at asparagine 5. Residues 23–43 traverse the membrane as a helical segment; the sequence is FPWLLFALILLVFLTSIASNV. The Cytoplasmic segment spans residues 44–60; that stretch reads VKIILIHIDSRLHTPMY. The chain crosses the membrane as a helical span at residues 61 to 83; the sequence is FLLSQLSLRDILYISTIVPKMLV. Over 84 to 97 the chain is Extracellular; that stretch reads DQVMSQRAISFAGC. Cysteine 97 and cysteine 189 form a disulfide bridge. Residues 98–118 traverse the membrane as a helical segment; sequence TAQHFLYLTLAGAEFFLLGLM. The Cytoplasmic portion of the chain corresponds to 119-139; it reads SYDRYVAICNPLHYPVLMSRK. A helical membrane pass occupies residues 140-160; sequence ICWLIVAAAWLGGSIDGFLLT. Over 161–197 the chain is Extracellular; sequence PVTMQFPFCASREINHFFCEVPALLKLSCTDTSAYET. The chain crosses the membrane as a helical span at residues 198-218; it reads AMYVCCIMMLLIPFSVISGSY. The Cytoplasmic segment spans residues 219-244; sequence TRILITVYRMSEAEGRGKAVATCSSH. A helical transmembrane segment spans residues 245-265; it reads MVVVSLFYGAAMYTYVLPHSY. Topologically, residues 266–271 are extracellular; the sequence is HTPEQD. The chain crosses the membrane as a helical span at residues 272–292; sequence KAVSAFYTILTPMLNPLIYSL. The Cytoplasmic segment spans residues 293-317; that stretch reads RNKDVTGALQKVVGRCVSSGKVTTF.

Belongs to the G-protein coupled receptor 1 family.

The protein localises to the cell membrane. In terms of biological role, odorant receptor. This chain is Olfactory receptor 2T27 (OR2T27), found in Homo sapiens (Human).